A 334-amino-acid chain; its full sequence is ELMO domain-containing protein 1 (334 aa).

In terms of domain architecture, ELMO spans 133-314 (QHEEMLLKLW…KFRKRIIKQL (182 aa)).

Acts as a GTPase-activating protein (GAP) toward guanine nucleotide exchange factors like ARL2, ARL3, ARF1 and ARF6, but not for GTPases outside the Arf family. This chain is ELMO domain-containing protein 1 (ELMOD1), found in Homo sapiens (Human).